Consider the following 115-residue polypeptide: uncharacterized protein (115 aa).

This is an uncharacterized protein from Gallus gallus (Chicken).